Consider the following 70-residue polypeptide: Putative membrane protein insertion efficiency factor (70 aa).

Belongs to the UPF0161 family.

The protein localises to the cell inner membrane. Its function is as follows. Could be involved in insertion of integral membrane proteins into the membrane. The chain is Putative membrane protein insertion efficiency factor from Sphingopyxis alaskensis (strain DSM 13593 / LMG 18877 / RB2256) (Sphingomonas alaskensis).